Here is a 278-residue protein sequence, read N- to C-terminus: Bifunctional protein FolD (278 aa).

Residues 162–164 (GAG) and I228 contribute to the NADP(+) site.

It belongs to the tetrahydrofolate dehydrogenase/cyclohydrolase family. In terms of assembly, homodimer.

It catalyses the reaction (6R)-5,10-methylene-5,6,7,8-tetrahydrofolate + NADP(+) = (6R)-5,10-methenyltetrahydrofolate + NADPH. The catalysed reaction is (6R)-5,10-methenyltetrahydrofolate + H2O = (6R)-10-formyltetrahydrofolate + H(+). It participates in one-carbon metabolism; tetrahydrofolate interconversion. Functionally, catalyzes the oxidation of 5,10-methylenetetrahydrofolate to 5,10-methenyltetrahydrofolate and then the hydrolysis of 5,10-methenyltetrahydrofolate to 10-formyltetrahydrofolate. The polypeptide is Bifunctional protein FolD (Hydrogenobaculum sp. (strain Y04AAS1)).